A 401-amino-acid chain; its full sequence is Tryptophan synthase beta chain (401 aa).

Lys-91 carries the post-translational modification N6-(pyridoxal phosphate)lysine.

Belongs to the TrpB family. Tetramer of two alpha and two beta chains. Requires pyridoxal 5'-phosphate as cofactor.

The catalysed reaction is (1S,2R)-1-C-(indol-3-yl)glycerol 3-phosphate + L-serine = D-glyceraldehyde 3-phosphate + L-tryptophan + H2O. The protein operates within amino-acid biosynthesis; L-tryptophan biosynthesis; L-tryptophan from chorismate: step 5/5. Its function is as follows. The beta subunit is responsible for the synthesis of L-tryptophan from indole and L-serine. This is Tryptophan synthase beta chain from Lactococcus lactis subsp. cremoris (strain MG1363).